Consider the following 299-residue polypeptide: Putative pyrroline-5-carboxylate reductase 4 (299 aa).

This sequence belongs to the pyrroline-5-carboxylate reductase family.

It carries out the reaction L-proline + NADP(+) = (S)-1-pyrroline-5-carboxylate + NADPH + 2 H(+). The catalysed reaction is L-proline + NAD(+) = (S)-1-pyrroline-5-carboxylate + NADH + 2 H(+). The protein operates within amino-acid biosynthesis; L-proline biosynthesis; L-proline from L-glutamate 5-semialdehyde: step 1/1. The protein is Putative pyrroline-5-carboxylate reductase 4 of Caenorhabditis elegans.